Consider the following 182-residue polypeptide: 3-hydroxyanthranilate 3,4-dioxygenase (182 aa).

Residue Arg46 participates in O2 binding. Positions 50, 56, and 96 each coordinate Fe cation. Glu56 serves as a coordination point for substrate. Arg100 and Glu111 together coordinate substrate. 4 residues coordinate Fe cation: Cys126, Cys129, Cys163, and Cys166.

The protein belongs to the 3-HAO family. As to quaternary structure, homodimer. It depends on Fe(2+) as a cofactor.

The catalysed reaction is 3-hydroxyanthranilate + O2 = (2Z,4Z)-2-amino-3-carboxymuconate 6-semialdehyde. It functions in the pathway cofactor biosynthesis; NAD(+) biosynthesis; quinolinate from L-kynurenine: step 3/3. Functionally, catalyzes the oxidative ring opening of 3-hydroxyanthranilate to 2-amino-3-carboxymuconate semialdehyde, which spontaneously cyclizes to quinolinate. This chain is 3-hydroxyanthranilate 3,4-dioxygenase, found in Brucella anthropi (strain ATCC 49188 / DSM 6882 / CCUG 24695 / JCM 21032 / LMG 3331 / NBRC 15819 / NCTC 12168 / Alc 37) (Ochrobactrum anthropi).